A 958-amino-acid polypeptide reads, in one-letter code: MKIADLSPTNEFIPRHIGPTDSDIHEMLKTLGFNSLDQMADKVIPAQIRTTHAYADVGNGISEHGLLNHLKQMVSKNKVYKNYIGMGYHDTITPTVIQRNIFENPVWYTAYTPYQPEISQGRLEALLNFQTMIADLNGMEIANASLLDEGTAAAEAMFMAHSLCKNKANAFVVSPDMHPHVIEVIGTRAEPLGFEMIVMDPAKYDFAKPVFGVFFQYPNTNGTVEDYAAIAKKYKDHGALVTASTDLLAMTLLTPPGEWGADMVVGNSQRFGVPLGFGGPHAGFLATKDAFKRLMPGRLVGVSVDSQGKSALRLALQTREQHIRREKATSNICTAQVLLANMASMYAVYHGPAGLKKIALRVQRLTAILSAGLKKLNLEVGAGHVFDTVTVKTDKAAEIIAQAEKMQMNFRNYGGGKLGVSLNEATTLEDVEQIWAAFNLGKAAGFTALSVDESLADVTLPANLTRSTAYMTHQVFNSHHSETEMLRYIHHLQNKDLTLTHSMIPLGSCTMKLNATTELVPVSWPEISKLHPFAPTAQAVGLIEMIHDLEKKLCDITGFAAVSLQPNAGSQGEYAGLLVIRKYHQSRGQGHRNICLIPSSAHGTNPASAALVNMQVVVVACDDQGNVDVADLKAKAEQHKDNLAALMITYPSTHGVFEEGIVEICKIIHDNGGQVYMDGANMNALVGMCRPGVFGPDVSHMNLHKTFSIPHGGGGPGVGPIGVGAHLAEFLPKHSLVPEAGPANGISATTSAPWGSASILPISWAYITMMGAQGLRKATLVSILSANYIAKKLEAHYPVLYKGKNGLVAHECIVDVREIKKTSGIDVTDVAKRLMDFGFHAPTMSFPVAGTLMIEPTESESKKELDRFIESMVTIRKEIAAVETGKMDKENNALKNAPHTAQMLMKPEWNHPYSREEAVYPVEWLRGNKFWPVVGRVDNAYGDRNLICSCPSIEDYQA.

Lys-705 carries the N6-(pyridoxal phosphate)lysine modification.

Belongs to the GcvP family. As to quaternary structure, the glycine cleavage system is composed of four proteins: P, T, L and H. Pyridoxal 5'-phosphate is required as a cofactor.

It carries out the reaction N(6)-[(R)-lipoyl]-L-lysyl-[glycine-cleavage complex H protein] + glycine + H(+) = N(6)-[(R)-S(8)-aminomethyldihydrolipoyl]-L-lysyl-[glycine-cleavage complex H protein] + CO2. In terms of biological role, the glycine cleavage system catalyzes the degradation of glycine. The P protein binds the alpha-amino group of glycine through its pyridoxal phosphate cofactor; CO(2) is released and the remaining methylamine moiety is then transferred to the lipoamide cofactor of the H protein. The chain is Glycine dehydrogenase (decarboxylating) from Bdellovibrio bacteriovorus (strain ATCC 15356 / DSM 50701 / NCIMB 9529 / HD100).